We begin with the raw amino-acid sequence, 168 residues long: Ubiquitin-fold modifier-conjugating enzyme 1 (168 aa).

The Glycyl thioester intermediate role is filled by Cys116.

Belongs to the ubiquitin-conjugating enzyme family. UFC1 subfamily.

E2-like enzyme which forms an intermediate with UFM1 via a thioester linkage. The sequence is that of Ubiquitin-fold modifier-conjugating enzyme 1 from Trichoplax adhaerens (Trichoplax reptans).